The primary structure comprises 77 residues: Pi/alpha-stichotoxin-Hmg5b (77 aa).

The N-terminal stretch at 1–21 (MDYQRLLFLFAVAMVITTTVA) is a signal peptide. Positions 22–34 (LPKDTALMDGQLQ) are excised as a propeptide. Disulfide bonds link Cys-40–Cys-73, Cys-42–Cys-66, and Cys-56–Cys-74. Methionine sulfoxide; partial is present on Met-52.

Belongs to the sea anemone type 3 (BDS) potassium channel toxin family. In terms of processing, toxin occurs in two forms in the mucus, Hmg 1b-2 which is not oxidized and Hmg 1b-2 MetOx which is oxidized at Met-52.

The protein localises to the secreted. The protein resides in the nematocyst. The non-oxidized toxin is remarkably non-selective with activity on many different ion channels. Weakly and reversibly inhibits rat and human homomeric ASIC1 (isoform ASIC1a) (IC(50)=4.8 uM, and IC(50)=14.6 uM), and ASIC3 (IC(50)=15.9 uM). Molecular modeling interaction with ASIC1a suggests that this peptide hinders the collapse of acidic pockets and stabilizes nonconducting channels state. It activates several potassium channels including Kv1.1/KCNA1, Kv1.2/KCNA2, and drosophila Shaker IR. It moderately to potently inhibits potassium channels including Kv1.3/KCNA3, Kv1.4/KCNA4, Kv1.5/KCNA5, Kv1.6/KCNA6, Kv2.1/KCNB1, Kv4.2/KCND2, Kv7.1/KCNQ1, Kv7.2/Kv7.3 (KCNQ2/KCNQ3), Kv7.4/KCNQ4, hERG/KCNH2, and C.elegans QKT1. On sodium channels, it moderately to potently inhibits Nav1.1/SCN1A, Nav1.2/SCN2A, Nav1.3/SCN3A, Nav1.4/SCN4A, Nav1.5/SCN5A, Nav1.6/SCN8A, Nav1.7/SCN9A, Nav1.8/SCN10A, and B.germanica BgNav. It also moderately to potently inhibits Cav3.1/CACNA1G, Cav3.2/CACNA1H, and Cav3.3/CACNA1I. Significant shifts in the voltage-current relationship are observed on Kv and Nav, depending on the channel isoform, whereas the toxin does not seem to modulate the voltage-sensor domains of Cav channels, acting mainly as a pore blocker. Does not activate nicotinic acetylcholine receptors (nAChR), but potentiates ACh-elicited current of human alpha-7/CHRNA7 nAChR. Is also able to bind T.californica muscle-type nAChRs. In vivo, causes an excitatory effect in mice behavior. Also shows antihyperalgesic and analgesic activity in the acid-induced muscle pain mice model, and weak anti-inflammatory effect in models of acute local inflammation. Functionally, forms an oxidized toxin derivative (Hmg 1b-2 MetOx). Able to bind T.californica muscle-type nAChRs (alpha-1-beta-1-delta-epsilon (CHRNA1-CHRNB1-CHRND-CHRNE)). This is Pi/alpha-stichotoxin-Hmg5b from Heteractis magnifica (Magnificent sea anemone).